The primary structure comprises 242 residues: MRPSERAPDVLRVVTLETGVNRYAEGSCLISFGHTKVLVTATVEENVPGWMRNKGAGWVTAEYGMLPRATHTRGRREAALGKQSGRTQEIQRLIGRSLRAVVDLKALGERQISLDCDVLQADGGTRTAAITGAWVALRIAVNYLLEEGVLKTDPIVGQVAAVSCGVFKDTPVLDLDYEEDSQAEADSNFVLTNVGDIVEIQATGEKRGFTRGEFEQLFALAEKGIGELFVKQLEAVSAAKPR.

Phosphate is bound by residues Arg86 and 124-126; that span reads GTR.

Belongs to the RNase PH family. In terms of assembly, homohexameric ring arranged as a trimer of dimers.

It carries out the reaction tRNA(n+1) + phosphate = tRNA(n) + a ribonucleoside 5'-diphosphate. In terms of biological role, phosphorolytic 3'-5' exoribonuclease that plays an important role in tRNA 3'-end maturation. Removes nucleotide residues following the 3'-CCA terminus of tRNAs; can also add nucleotides to the ends of RNA molecules by using nucleoside diphosphates as substrates, but this may not be physiologically important. Probably plays a role in initiation of 16S rRNA degradation (leading to ribosome degradation) during starvation. This chain is Ribonuclease PH, found in Caulobacter sp. (strain K31).